A 204-amino-acid polypeptide reads, in one-letter code: Thymidylate kinase (204 aa).

Position 11-18 (11-18 (GLDKSGKT)) interacts with ATP.

Belongs to the thymidylate kinase family.

It catalyses the reaction dTMP + ATP = dTDP + ADP. It functions in the pathway pyrimidine metabolism; dTTP biosynthesis. The protein is Thymidylate kinase (TMK) of Camelus.